A 310-amino-acid polypeptide reads, in one-letter code: Mitochondrial thiamine pyrophosphate carrier 1 (310 aa).

6 helical membrane-spanning segments follow: residues 16–32 (VSPY…GGVA), 88–104 (ILYV…YSAL), 117–141 (IVMP…LTTY), 173–197 (GISG…LMFW), 218–234 (ICGF…TFPL), and 274–291 (GYGV…ISLW). Solcar repeat units follow at residues 16 to 107 (VSPY…LSKS), 120 to 205 (PSSV…AREF), and 211 to 299 (HVPF…VISA).

It belongs to the mitochondrial carrier (TC 2.A.29) family.

It is found in the mitochondrion inner membrane. Its function is as follows. Mitochondrial transporter that mediates uptake of thiamine pyrophosphate (ThPP) into mitochondria. This chain is Mitochondrial thiamine pyrophosphate carrier 1 (TPC1), found in Lodderomyces elongisporus (strain ATCC 11503 / CBS 2605 / JCM 1781 / NBRC 1676 / NRRL YB-4239) (Yeast).